The sequence spans 551 residues: Arginine--tRNA ligase (551 aa).

Positions 124–134 match the 'HIGH' region motif; the sequence is ANPTGPLHIGH.

This sequence belongs to the class-I aminoacyl-tRNA synthetase family. In terms of assembly, monomer.

It localises to the cytoplasm. It catalyses the reaction tRNA(Arg) + L-arginine + ATP = L-arginyl-tRNA(Arg) + AMP + diphosphate. The protein is Arginine--tRNA ligase of Solidesulfovibrio magneticus (strain ATCC 700980 / DSM 13731 / RS-1) (Desulfovibrio magneticus).